The primary structure comprises 338 residues: Replication factor C subunit 3 (338 aa).

An ATP-binding site is contributed by G57–T64.

The protein belongs to the activator 1 small subunits family. As to quaternary structure, heteropentamer of subunits RFC1, RFC2, RFC3, RFC4 and RFC5 that forms a complex with PCNA in the presence of ATP.

It localises to the nucleus. In terms of biological role, the elongation of primed DNA templates by DNA polymerase delta and epsilon requires the action of the accessory proteins proliferating cell nuclear antigen (PCNA) and activator 1. Subunit 3 binds ATP. The chain is Replication factor C subunit 3 (RFC3) from Blastobotrys adeninivorans (Yeast).